Reading from the N-terminus, the 274-residue chain is Diaminopimelate epimerase (274 aa).

3 residues coordinate substrate: Asn11, Gln44, and Asn64. The active-site Proton donor is Cys73. Substrate is bound by residues 74–75 (GN), Asn157, Asn190, and 208–209 (ER). Cys217 serves as the catalytic Proton acceptor. 218–219 (GS) is a binding site for substrate.

Belongs to the diaminopimelate epimerase family. Homodimer.

The protein resides in the cytoplasm. It catalyses the reaction (2S,6S)-2,6-diaminopimelate = meso-2,6-diaminopimelate. The protein operates within amino-acid biosynthesis; L-lysine biosynthesis via DAP pathway; DL-2,6-diaminopimelate from LL-2,6-diaminopimelate: step 1/1. In terms of biological role, catalyzes the stereoinversion of LL-2,6-diaminopimelate (L,L-DAP) to meso-diaminopimelate (meso-DAP), a precursor of L-lysine and an essential component of the bacterial peptidoglycan. The sequence is that of Diaminopimelate epimerase from Actinobacillus pleuropneumoniae serotype 7 (strain AP76).